Reading from the N-terminus, the 335-residue chain is MTAPSKPVLVADIGGTNARFALADVDASVPLLDDTSREFAVVDFTSLGEAARYYLDQIGVQATQGVFAVAGRVDGDEARITNHPWVISRSRTASMLGFSTLHLINDFAAQAMAISLLRPQDVVQVGGASWRPAPIDQPRNYGVIGPGTGLGVGGLIIRHGRCFPLETEGGHVSFPPGTPEEIRILEILSEQFGRVSNERLICGPGLVNIHRALSEIAGVDPGPLQPKDITARAAAGDPRSSRTIDLFCAIFGAIAGDMVLMQGAWDGVFLTGGLVPKVLDSLQHSGFRQRFEHKGRFSAIMSRVPSLAVMHPHAGLLGAAAYAVDAQRQPPGEQR.

11-16 (ADIGGT) is an ATP binding site.

It belongs to the bacterial glucokinase family.

The protein resides in the cytoplasm. The enzyme catalyses D-glucose + ATP = D-glucose 6-phosphate + ADP + H(+). The chain is Glucokinase from Xanthomonas oryzae pv. oryzae (strain MAFF 311018).